Here is an 82-residue protein sequence, read N- to C-terminus: MDSIVSAASVIAAGLAVGLAAIGPGIGQGSAAANAVEGIARQPEVEGKIRGTLLLSLAFMESLTIYGLVVALSLLFANPYVG.

Transmembrane regions (helical) follow at residues 7–27 and 57–77; these read AASVIAAGLAVGLAAIGPGIG and LAFMESLTIYGLVVALSLLFA.

This sequence belongs to the ATPase C chain family. F-type ATPases have 2 components, F(1) - the catalytic core - and F(0) - the membrane proton channel. F(1) has five subunits: alpha(3), beta(3), gamma(1), delta(1), epsilon(1). F(0) has four main subunits: a(1), b(1), b'(1) and c(10-14). The alpha and beta chains form an alternating ring which encloses part of the gamma chain. F(1) is attached to F(0) by a central stalk formed by the gamma and epsilon chains, while a peripheral stalk is formed by the delta, b and b' chains.

The protein localises to the plastid. Its subcellular location is the chloroplast thylakoid membrane. In terms of biological role, f(1)F(0) ATP synthase produces ATP from ADP in the presence of a proton or sodium gradient. F-type ATPases consist of two structural domains, F(1) containing the extramembraneous catalytic core and F(0) containing the membrane proton channel, linked together by a central stalk and a peripheral stalk. During catalysis, ATP synthesis in the catalytic domain of F(1) is coupled via a rotary mechanism of the central stalk subunits to proton translocation. Functionally, key component of the F(0) channel; it plays a direct role in translocation across the membrane. A homomeric c-ring of between 10-14 subunits forms the central stalk rotor element with the F(1) delta and epsilon subunits. This is ATP synthase subunit c, chloroplastic from Porphyra purpurea (Red seaweed).